We begin with the raw amino-acid sequence, 205 residues long: Variable small protein 11 (205 aa).

A signal peptide spans 1 to 18 (MRKRISAIIMTLFMVFMS). Residue Cys-19 is the site of N-palmitoyl cysteine attachment. Cys-19 is lipidated: S-diacylglycerol cysteine.

This sequence belongs to the variable small protein (Vsp) family.

The protein resides in the cell outer membrane. The Vlp and Vsp proteins are antigenically distinct proteins, only one vlp or vsp gene is transcriptionally active at any one time. Switching between these genes is a mechanism of host immune response evasion. This chain is Variable small protein 11, found in Borrelia hermsii.